We begin with the raw amino-acid sequence, 90 residues long: MFGLGGAPQISSEQKLQAAEAELDMVTGMFNQLVDQCHSKCINKSYGDSDITKQEALCLDRCVAKYFDTNVQVGEHMQKLGQSGQFMGRK.

A Twin CX3C motif motif is present at residues 37-62; it reads CHSKCINKSYGDSDITKQEALCLDRC. Disulfide bonds link Cys37/Cys62 and Cys41/Cys58.

Belongs to the small Tim family. In terms of assembly, heterohexamer; composed of 3 copies of TIM9 and 3 copies of TIM10, named soluble 70 kDa complex. Associates directly with the TIM22 complex, whose core is composed of TIM22 and TIM54. Interacts with the transmembrane regions of multi-pass transmembrane proteins in transit.

Its subcellular location is the mitochondrion inner membrane. Functionally, mitochondrial intermembrane chaperone that participates in the import and insertion of multi-pass transmembrane proteins into the mitochondrial inner membrane. Also required for the transfer of beta-barrel precursors from the TOM complex to the sorting and assembly machinery (SAM complex) of the outer membrane. Acts as a chaperone-like protein that protects the hydrophobic precursors from aggregation and guide them through the mitochondrial intermembrane space. This chain is Mitochondrial import inner membrane translocase subunit Tim10 (TIM10), found in Pichia sorbitophila (strain ATCC MYA-4447 / BCRC 22081 / CBS 7064 / NBRC 10061 / NRRL Y-12695) (Hybrid yeast).